The primary structure comprises 550 residues: PAB1-binding protein 1 (550 aa).

Residues 11-95 (RLEYLYLNLV…IVMIEVQNAK (85 aa)) form the Sm domain. 2 disordered regions span residues 201–296 (HDDE…HKRM) and 441–550 (GMGN…RVGK). The span at 214-223 (DVHRPQEKKP) shows a compositional bias: basic and acidic residues. Residues 244–262 (AAAAPATAPTTAPAAAPAP) are compositionally biased toward low complexity. A compositionally biased stretch (pro residues) spans 263-281 (AAAPPAAAPAAAAPPPPPA).

The protein belongs to the ataxin-2 family. Forms a complex composed of at least MKT1, PBP1, XAC1 and LSM12. Forms a complex composed of at least MKT1L, PBP1, XAC1 and LSM12. Within the complex, interacts with MKT1 (via C-terminus); the interaction is direct. Interacts (via C-terminus) with ZC3H11; the interaction is direct.

It localises to the cytoplasm. The protein resides in the cytosol. Its subcellular location is the stress granule. Involved in post-transcriptional regulation of gene expression. Promotes mRNA stabilization by bridging poly(A)-binding protein to mRNAs. This Trypanosoma brucei brucei (strain 927/4 GUTat10.1) protein is PAB1-binding protein 1.